The sequence spans 145 residues: Small ribosomal subunit protein eS19 (145 aa).

This sequence belongs to the eukaryotic ribosomal protein eS19 family. Component of the small ribosomal subunit.

Its subcellular location is the cytoplasm. The protein resides in the nucleus. Its function is as follows. Component of the small ribosomal subunit. The ribosome is a large ribonucleoprotein complex responsible for the synthesis of proteins in the cell. Required for pre-rRNA processing and maturation of 40S ribosomal subunits. This Myxine glutinosa (Atlantic hagfish) protein is Small ribosomal subunit protein eS19 (rps19).